Consider the following 389-residue polypeptide: UDP-GlcNAc:betaGal beta-1,3-N-acetylglucosaminyltransferase 8 (389 aa).

At 1 to 7 (MRCRKCQ) the chain is on the cytoplasmic side. The helical; Signal-anchor for type II membrane protein transmembrane segment at 8-24 (LCLSALLTLLGLKVYIE) threads the bilayer. The Lumenal portion of the chain corresponds to 25 to 389 (WTSESWLKKA…RHLWVPELQC (365 aa)). Positions 36–57 (PRGALPSPTPPNAEPTLPTNLS) are disordered. Asn55 and Asn212 each carry an N-linked (GlcNAc...) asparagine glycan.

Belongs to the glycosyltransferase 31 family. Interacts with B3GNT2; this interaction greatly increases B3GNT2 catalytic activity, independently of B3GNT8 enzymatic activity.

It localises to the golgi apparatus membrane. It functions in the pathway protein modification; protein glycosylation. Beta-1,3-N-acetylglucosaminyltransferase that plays a role in the elongation of specific branch structures of multiantennary N-glycans. Has strong activity towards tetraantennary N-glycans and 2,6 triantennary glycans. The protein is UDP-GlcNAc:betaGal beta-1,3-N-acetylglucosaminyltransferase 8 of Mus musculus (Mouse).